The chain runs to 260 residues: Spectinomycin 9-adenylyltransferase (260 aa).

The enzyme catalyses spectinomycin + ATP = 9-O-adenylylspectinomycin + diphosphate. In terms of biological role, mediates bacterial resistance to the antibiotic spectinomycin but not streptomycin. This is Spectinomycin 9-adenylyltransferase (ant1) from Staphylococcus aureus (strain Mu50 / ATCC 700699).